The sequence spans 472 residues: Sulfate adenylyltransferase subunit 1 (472 aa).

Positions 24-240 (KSLLRFLTCG…ENAEVGTRDL (217 aa)) constitute a tr-type G domain. The tract at residues 33–40 (GSVDDGKS) is G1. 33-40 (GSVDDGKS) contacts GTP. Residues 91–95 (GITID) form a G2 region. A G3 region spans residues 112-115 (DTPG). Residues 112–116 (DTPGH) and 167–170 (NKMD) each bind GTP. Positions 167–170 (NKMD) are G4. The interval 204-206 (SAL) is G5.

This sequence belongs to the TRAFAC class translation factor GTPase superfamily. Classic translation factor GTPase family. CysN/NodQ subfamily. Heterodimer composed of CysD, the smaller subunit, and CysN.

The enzyme catalyses sulfate + ATP + H(+) = adenosine 5'-phosphosulfate + diphosphate. Its pathway is sulfur metabolism; hydrogen sulfide biosynthesis; sulfite from sulfate: step 1/3. Its function is as follows. With CysD forms the ATP sulfurylase (ATPS) that catalyzes the adenylation of sulfate producing adenosine 5'-phosphosulfate (APS) and diphosphate, the first enzymatic step in sulfur assimilation pathway. APS synthesis involves the formation of a high-energy phosphoric-sulfuric acid anhydride bond driven by GTP hydrolysis by CysN coupled to ATP hydrolysis by CysD. This chain is Sulfate adenylyltransferase subunit 1, found in Tolumonas auensis (strain DSM 9187 / NBRC 110442 / TA 4).